A 481-amino-acid polypeptide reads, in one-letter code: MRRLTVRLFTAVLAALALLTMGTPAHATAPASPSVTFTNPLAEKRADPHIFKHTDGYYYFTATVPEYDRIVLRRATTLQGLATAPETTIWTKHASGVMGAHIWAPEIHFIDGKWYVYFAAGSTSDVWAIRMYVLESGAANPLTGSWTEKGQIATPVSSFSLDATTFVVNGVRHLAWAQRNPAEDNNTSLFIAKMANPWTISGTPTEISQPTLSWETVGYKVNEGPAVIQHGGKVFLTYSASATDANYCLGMLSASASADLLNAASWTKSSQPVFKTSEATGQYGPGHNSFTVSEDGKSDILVYHDRNYKDISGDPLNDPNRRTRLQKVYWNADGTPNFGIPVADGVTPVRFSSYNYPDRYIRHWDFRARIEANVTNLADSQFRVVTGLAGSGTISLESANYPGYYLRHKNYEVWVEKNDGSSAFKNDASFSRRAGLADSADGIAFESYNYPGRYLRHYENLLRIQPVSTALDRQDATFYAE.

An N-terminal signal peptide occupies residues 1–27 (MRRLTVRLFTAVLAALALLTMGTPAHA). The interval 37 to 336 (FTNPLAEKRA…KVYWNADGTP (300 aa)) is catalytic. Asp-47 (proton acceptor) is an active-site residue. Residue Asn-186 coordinates substrate. The active-site Proton donor is Glu-223. Residues His-287, Arg-321, 363–366 (HWDF), Asp-379, 457–460 (HYEN), and Asp-475 contribute to the substrate site. Residues 349–479 (VRFSSYNYPD…ALDRQDATFY (131 aa)) form an ABD region.

It belongs to the glycosyl hydrolase 43 family.

It localises to the secreted. It catalyses the reaction Hydrolysis of terminal non-reducing alpha-L-arabinofuranoside residues in alpha-L-arabinosides.. It functions in the pathway glycan metabolism; L-arabinan degradation. Functionally, involved in the degradation of arabinan and is a key enzyme in the complete degradation of the plant cell wall. Catalyzes only the cleavage of terminal alpha-(1-&gt;5) arabinofuranosyl bonds of arabinan present in the arabinofuranosyl polysaccharides or oligosaccharides. It cannot act on other arabinose-containing polysaccharides and arabinoxylo-oligosaccharides. The sequence is that of Extracellular exo-alpha-(1-&gt;5)-L-arabinofuranosidase from Streptomyces avermitilis (strain ATCC 31267 / DSM 46492 / JCM 5070 / NBRC 14893 / NCIMB 12804 / NRRL 8165 / MA-4680).